The primary structure comprises 64 residues: UPF0434 protein Oant_3286 (64 aa).

This sequence belongs to the UPF0434 family.

The polypeptide is UPF0434 protein Oant_3286 (Brucella anthropi (strain ATCC 49188 / DSM 6882 / CCUG 24695 / JCM 21032 / LMG 3331 / NBRC 15819 / NCTC 12168 / Alc 37) (Ochrobactrum anthropi)).